Here is an 899-residue protein sequence, read N- to C-terminus: Auxin response factor 25 (899 aa).

The tract at residues 1–20 is disordered; it reads MKLSPPASADMPQALPENDG. Positions 132–234 form a DNA-binding region, TF-B3; it reads FCKTLTASDT…QLLLGIRRAN (103 aa). Residues 546–564 are compositionally biased toward low complexity; sequence RQHVLQEQSSQEMQQQLPS. Residues 546–586 form a disordered region; sequence RQHVLQEQSSQEMQQQLPSSDHHVADVASESGSAPQAQSSL. A compositionally biased stretch (polar residues) spans 575-586; sequence ESGSAPQAQSSL. The 85-residue stretch at 766–850 folds into the PB1 domain; the sequence is ATFVKVYKSG…WCIKILSPQE (85 aa).

Belongs to the ARF family. As to quaternary structure, homodimers and heterodimers. In terms of tissue distribution, expressed in roots, culms, leaves and young panicles.

The protein resides in the nucleus. Functionally, auxin response factors (ARFs) are transcriptional factors that bind specifically to the DNA sequence 5'-TGTCTC-3' found in the auxin-responsive promoter elements (AuxREs). In Oryza sativa subsp. japonica (Rice), this protein is Auxin response factor 25 (ARF25).